A 128-amino-acid polypeptide reads, in one-letter code: MRFCLMVTGPAYGSQHASSAWLFARELLAQGHSVESVFFYREGVLNASELTAPASDEVDMTRNWQQLHQQHGVALNVCVAAALRRGVSDKQEAANLGLAAANLAEGFQLTGLGALAEAALSCDRLVQF.

The Cysteine persulfide intermediate role is filled by Cys78.

It belongs to the DsrE/TusD family. Heterohexamer, formed by a dimer of trimers. The hexameric TusBCD complex contains 2 copies each of TusB, TusC and TusD. The TusBCD complex interacts with TusE.

It localises to the cytoplasm. Functionally, part of a sulfur-relay system required for 2-thiolation of 5-methylaminomethyl-2-thiouridine (mnm(5)s(2)U) at tRNA wobble positions. Accepts sulfur from TusA and transfers it in turn to TusE. In Erwinia tasmaniensis (strain DSM 17950 / CFBP 7177 / CIP 109463 / NCPPB 4357 / Et1/99), this protein is Sulfurtransferase TusD.